Here is a 909-residue protein sequence, read N- to C-terminus: Protein translocase subunit SecA (909 aa).

ATP-binding positions include Gln87, 105–109 (GEGKT), and Asp514. The disordered stretch occupies residues 879-909 (TPVQGGPKVGRNDPCPCGSGKKYKHCHGKLS). 4 residues coordinate Zn(2+): Cys893, Cys895, Cys904, and His905. The span at 899–909 (KKYKHCHGKLS) shows a compositional bias: basic residues.

Belongs to the SecA family. In terms of assembly, monomer and homodimer. Part of the essential Sec protein translocation apparatus which comprises SecA, SecYEG and auxiliary proteins SecDF-YajC and YidC. The cofactor is Zn(2+).

It is found in the cell inner membrane. The protein localises to the cytoplasm. It carries out the reaction ATP + H2O + cellular proteinSide 1 = ADP + phosphate + cellular proteinSide 2.. Part of the Sec protein translocase complex. Interacts with the SecYEG preprotein conducting channel. Has a central role in coupling the hydrolysis of ATP to the transfer of proteins into and across the cell membrane, serving both as a receptor for the preprotein-SecB complex and as an ATP-driven molecular motor driving the stepwise translocation of polypeptide chains across the membrane. The polypeptide is Protein translocase subunit SecA (Azoarcus sp. (strain BH72)).